Reading from the N-terminus, the 321-residue chain is Serine/threonine-protein phosphatase PP1 isozyme 4 (321 aa).

Ala-2 carries the post-translational modification N-acetylalanine. Asp-74, His-76, Asp-102, and Asn-134 together coordinate Mn(2+). Catalysis depends on His-135, which acts as the Proton donor. Residues His-183 and His-258 each coordinate Mn(2+).

It belongs to the PPP phosphatase family. PP-1 subfamily. As to quaternary structure, interacts with the DELLA proteins RGA and GAI. Interacts with PIF3 and PIF5. Interacts with the auxin efflux carrier PIN1. Mn(2+) is required as a cofactor. In terms of tissue distribution, expressed in the vasculature of roots and cotyledons, tips of leaves, guard cells, bases of trichomes, pistils and stamen filaments.

The protein localises to the nucleus. It localises to the cytoplasm. It catalyses the reaction O-phospho-L-seryl-[protein] + H2O = L-seryl-[protein] + phosphate. It carries out the reaction O-phospho-L-threonyl-[protein] + H2O = L-threonyl-[protein] + phosphate. Phosphatase activity is strongly reduced by the protein phosphatase inhibitor 2 (I-2). In terms of biological role, serine/threonine-protein phosphatase that possesses phosphatase activity toward para-nitrophenyl phosphate (pNPP) in vitro. Acts as a positive regulator in the gibberellin (GA) signaling pathway to regulate plant growth and development. Promotes the GA-induced and proteasomal-dependent degradation of the DELLA proteins RGA and GAI by directly binding and dephosphorylating these proteins. Involved in the regulation of phytochrome B (phyB) signaling pathway that controls photomorphogenesis. Promotes the proteasomal-dependent degradation of PIF5 factor by directly binding and dephosphorylating this protein. Involved in the regulation of pavement cell (PC) interdigitation by modulating the auxin efflux carrier PIN1 polarity and endocytic trafficking. Regulates PIN1 polar targeting through direct binding and dephosphorylation. Acts antagonistically with PID in regulating PC development. The sequence is that of Serine/threonine-protein phosphatase PP1 isozyme 4 from Arabidopsis thaliana (Mouse-ear cress).